The primary structure comprises 195 residues: Phosphoheptose isomerase (195 aa).

Residues 36 to 195 form the SIS domain; it reads LAHCLLSDGK…DLVDHQLFGE (160 aa). 51–53 is a binding site for substrate; sequence NGG. Residues H60 and E64 each contribute to the Zn(2+) site. Substrate-binding positions include E64, 93-94, 119-121, S124, and Q174; these read ND and STS. Zn(2+) is bound by residues Q174 and H182.

It belongs to the SIS family. GmhA subfamily. Homotetramer. Zn(2+) is required as a cofactor.

The protein resides in the cytoplasm. The enzyme catalyses 2 D-sedoheptulose 7-phosphate = D-glycero-alpha-D-manno-heptose 7-phosphate + D-glycero-beta-D-manno-heptose 7-phosphate. It functions in the pathway carbohydrate biosynthesis; D-glycero-D-manno-heptose 7-phosphate biosynthesis; D-glycero-alpha-D-manno-heptose 7-phosphate and D-glycero-beta-D-manno-heptose 7-phosphate from sedoheptulose 7-phosphate: step 1/1. In terms of biological role, catalyzes the isomerization of sedoheptulose 7-phosphate in D-glycero-D-manno-heptose 7-phosphate. The protein is Phosphoheptose isomerase of Methylococcus capsulatus (strain ATCC 33009 / NCIMB 11132 / Bath).